The chain runs to 1372 residues: Cell fusion protein fus1 (1372 aa).

Positions 104–522 (LCPDDPNLVN…EQGNNAPGYS (419 aa)) constitute a GBD/FH3 domain. The SH3-binding signature appears at 802-817 (PFKAPPPAPLPPPAPP). Residues 868 to 1278 (PGELCNPSKR…AFLRLQALKA (411 aa)) form the FH2 domain.

It belongs to the formin homology family. BNI1 subfamily. In terms of assembly, interacts with actin at the FH2 domain.

The protein localises to the cytoplasm. Its function is as follows. Required for cell fusion. It associates with the pre-zygotic projection tips in conjugating cells. The sequence is that of Cell fusion protein fus1 (fus1) from Schizosaccharomyces pombe (strain 972 / ATCC 24843) (Fission yeast).